The primary structure comprises 152 residues: Deoxyuridine 5'-triphosphate nucleotidohydrolase (152 aa).

Substrate is bound by residues 71 to 73, Asn-84, 88 to 90, and Met-98; these read RSG and LID.

The protein belongs to the dUTPase family. Mg(2+) serves as cofactor.

It carries out the reaction dUTP + H2O = dUMP + diphosphate + H(+). The protein operates within pyrimidine metabolism; dUMP biosynthesis; dUMP from dCTP (dUTP route): step 2/2. In terms of biological role, this enzyme is involved in nucleotide metabolism: it produces dUMP, the immediate precursor of thymidine nucleotides and it decreases the intracellular concentration of dUTP so that uracil cannot be incorporated into DNA. This is Deoxyuridine 5'-triphosphate nucleotidohydrolase from Salmonella arizonae (strain ATCC BAA-731 / CDC346-86 / RSK2980).